A 365-amino-acid polypeptide reads, in one-letter code: DNA replication and repair protein RecF (365 aa).

30-37 (GLNAQGKT) lines the ATP pocket.

The protein belongs to the RecF family.

It is found in the cytoplasm. Its function is as follows. The RecF protein is involved in DNA metabolism; it is required for DNA replication and normal SOS inducibility. RecF binds preferentially to single-stranded, linear DNA. It also seems to bind ATP. This is DNA replication and repair protein RecF from Chlamydia trachomatis serovar L2b (strain UCH-1/proctitis).